The chain runs to 193 residues: Protein PATRONUS 1 (193 aa).

A DEN-box motif is present at residues 14 to 16 (DEN). A D-box motif is present at residues 46–49 (RKAL).

Interacts directly with the anaphase promoting complex/cyclosome (APC/C) through the CDC27B and CDC20-1 subunits. In terms of tissue distribution, expressed in somatic and reproductive tissues. Expressed in inflorescence, young buds, roots and basal portion of young leaves. Expressed in proliferating cells such as apical meristems of roots and shoots, expanding cotyledons and leaves, root vascular tissues, and in stomatal precursor cells.

The protein localises to the nucleus. It is found in the cytoplasm. Functionally, required for the maintenance of centromeric cohesion during interkinesis, until meiosis II. Required for regular configuration and segregation of sister chromatids in meiosis II. Also required for centromere cohesion during meiosis I. Involved in spindle organization at the end of telophase I and in meiosis II. Required to prevent precocious release of pericentromeric cohesins during meiosis, but not for cohesion establishment and monopolar orientation of kinetochores at meiosis I. Involved also in somatic development. Regulates mitotic cell division and ploidy stability in somatic cell types. May be involved in the organization of microtubules dynamics. Involved in abiotic stresses and mono- or divalent ions tolerance and may play a role in maintaining meristematic activity under saline conditions. PANS1 and GIG1 are part of a network linking centromere cohesion and cell cycle progression through control of APC/C activity. Regulates the number of dividing cells in root meristem and is necessary for the anaphase onset control through an APC/C-mediated pathway. Involved in maintaining correct chromosome arm cohesion under stress conditions. This chain is Protein PATRONUS 1, found in Arabidopsis thaliana (Mouse-ear cress).